The primary structure comprises 178 residues: MSGVAIHASSWGAALVRISPYTFSAIGIAISIGVSVLGAAWGIYITGSSLIGAAIEAPRITSKNLISVIFCEAVAIYGVIVAIILQTKLESVPSSKMYDAESLRAGYAIFASGIIVGFANLVCGLCVGIIGSSCALSDAQNSTLFVKILVIEIFGSALGLFGVIVGIIMSAQATWPTK.

Residues 1 to 24 (MSGVAIHASSWGAALVRISPYTFS) are Lumenal-facing. The helical transmembrane segment at 25-45 (AIGIAISIGVSVLGAAWGIYI) threads the bilayer. Topologically, residues 46–64 (TGSSLIGAAIEAPRITSKN) are cytoplasmic. A helical membrane pass occupies residues 65-85 (LISVIFCEAVAIYGVIVAIIL). The Lumenal segment spans residues 86–108 (QTKLESVPSSKMYDAESLRAGYA). The helical transmembrane segment at 109–129 (IFASGIIVGFANLVCGLCVGI) threads the bilayer. Residues 130–147 (IGSSCALSDAQNSTLFVK) lie on the Cytoplasmic side of the membrane. The helical transmembrane segment at 148-168 (ILVIEIFGSALGLFGVIVGII) threads the bilayer. Over 169–178 (MSAQATWPTK) the chain is Lumenal.

It belongs to the V-ATPase proteolipid subunit family. V-ATPase is a heteromultimeric enzyme composed of a peripheral catalytic V1 complex (components A to H) attached to an integral membrane V0 proton pore complex (components: a, c, c'', d and e). The proteolipid components c and c'' are present as a hexameric ring that forms the proton-conducting pore. Interacts with APD2.

It localises to the endoplasmic reticulum membrane. Its subcellular location is the golgi apparatus membrane. Functionally, proton-conducting pore forming subunit of the membrane integral V0 complex of vacuolar ATPase. V-ATPase is responsible for acidifying a variety of intracellular compartments in eukaryotic cells. This chain is V-type proton ATPase subunit c''2 (VHA-c''2), found in Arabidopsis thaliana (Mouse-ear cress).